We begin with the raw amino-acid sequence, 187 residues long: Ribosome-recycling factor (187 aa).

It belongs to the RRF family.

The protein resides in the cytoplasm. Responsible for the release of ribosomes from messenger RNA at the termination of protein biosynthesis. May increase the efficiency of translation by recycling ribosomes from one round of translation to another. This chain is Ribosome-recycling factor, found in Mycoplasmopsis pulmonis (strain UAB CTIP) (Mycoplasma pulmonis).